A 460-amino-acid polypeptide reads, in one-letter code: MIKGSSLKRFKSLVMAAIFSVSIISTAIASSAADQIPFPYDAKYPNGAYSCLADSQSIGNNLVRSEWEQWKSAHITSNGARGYKRVQRDASTNYDTVSEGLGYGLLLSVYFGEQQLFDDLYRYVKVFLNSNGLMSWRIDSSGNIMGKDSIGAATDADEDIAVSLVFAHKKWGTSGGFNYQTEAKNYINNIYNKMVEPGTYVIKAGDTWGGSNVTNPSYFAPAWYRIFADFTGNSGWINVANKCYEIADKARNSNTGLVPDWCTANGTPASGQGFDFYYDAIRYQWRAAIDYSWYGTAKAKTHCDAISNFFKNIGYANIKDGYTISGSQISSNHTATFVSCAAAAAMTGTDTTYAKNIYNECVKVKDSGNYTYFGNTLRMMVLLYTTGNFPNLYTYNSQPKPDLKGDVNNDGAIDALDIAALKKAILTQTTSNISLTNADMNNDGNIDAIDFAQLKVKLLN.

An N-terminal signal peptide occupies residues 1–32 (MIKGSSLKRFKSLVMAAIFSVSIISTAIASSA). Glu99 (proton donor) is an active-site residue. Asp155 functions as the Nucleophile in the catalytic mechanism. The Dockerin domain maps to 400 to 460 (KPDLKGDVNN…FAQLKVKLLN (61 aa)).

It belongs to the glycosyl hydrolase 8 (cellulase D) family. As to quaternary structure, monomer. Post-translationally, there are two forms of the cellulase. The shorter form lacks probably the C-terminal reiterated domains.

It catalyses the reaction Endohydrolysis of (1-&gt;4)-beta-D-glucosidic linkages in cellulose, lichenin and cereal beta-D-glucans.. The protein operates within glycan metabolism; cellulose degradation. Functionally, the biological conversion of cellulose to glucose generally requires three types of hydrolytic enzymes: (1) Endoglucanases which cut internal beta-1,4-glucosidic bonds; (2) Exocellobiohydrolases that cut the disaccharide cellobiose from the non-reducing end of the cellulose polymer chain; (3) Beta-1,4-glucosidases which hydrolyze the cellobiose and other short cello-oligosaccharides to glucose. The chain is Endoglucanase C (celCCC) from Ruminiclostridium cellulolyticum (strain ATCC 35319 / DSM 5812 / JCM 6584 / H10) (Clostridium cellulolyticum).